A 262-amino-acid chain; its full sequence is MRYQNMFETLKKHKKMAFIPFVTLGDPNYELSFEIVKTLIISGVSALELGLAFSDPVADGTTIQASHLRALKHASMAKNFQLLKKIRGYNHDIPIGLLAYANLIFSYGVDGFYAQAKECGVDSVLIADMPLIEKELVIKSAQKHQIKQIFIASPNASSKDLEQVATHSQGYIYTLARSGVTGASHTLENDASAIIKTLKTFSSTPALLGFGISKKEHITNAKGMGADGVICGSALVKIIEENLNNEDAMLEKIKGFVGGMIS.

Catalysis depends on proton acceptor residues Glu48 and Asp59.

Belongs to the TrpA family. As to quaternary structure, tetramer of two alpha and two beta chains.

The catalysed reaction is (1S,2R)-1-C-(indol-3-yl)glycerol 3-phosphate + L-serine = D-glyceraldehyde 3-phosphate + L-tryptophan + H2O. It participates in amino-acid biosynthesis; L-tryptophan biosynthesis; L-tryptophan from chorismate: step 5/5. In terms of biological role, the alpha subunit is responsible for the aldol cleavage of indoleglycerol phosphate to indole and glyceraldehyde 3-phosphate. The protein is Tryptophan synthase alpha chain of Helicobacter pylori (strain J99 / ATCC 700824) (Campylobacter pylori J99).